Consider the following 557-residue polypeptide: MASLLANGISSFSPQPTSDSSKSPKGFHPKPESLKFPSPKSLNPTRPIFKLRADVGIDSRPIGASESSSSGTSTVSSTDKLQQYFQNLDYDKKYGFVEDIDSFTIPKGLSEETIRLISKLKEEPDWMLEFRFKAYAKFLKLEEPKWSDNRYPSINFQDMCYYSAPKKKPTLNSLDEVDPQLLEYFDKLGVPLTEQKRLANVAVDAVIDSVSIATTHRKTLEKSGVIFCSISEAIREYPDLIKKYLGRVVPSDDNYYAALNSAVFSDGSFCYIPKNTRCPMPISTYFRINAMETGQFERTLIVAEEGSFVEYLEGCTAPSYDTNQLHAAVVELYCGKGAEIKYSTVQNWYAGDEQGKGGIYNFVTKRGLCAGDRSKISWTQVETGSAITWKYPSVVLEGDDSVGEFYSVALTNNYQQADTGTKMIHKGKNTKSRIISKGISAGHSRNCYRGLVQVQSKAEGAKNTSTCDSMLIGDKAAANTYPYIQVKNPSAKVEHEASTSKIGEDQLFYFQQRGIDHERALAAMISGFCRDVFNKLPDEFGAEVNQLMSIKLEGSVG.

The interval 1–47 (MASLLANGISSFSPQPTSDSSKSPKGFHPKPESLKFPSPKSLNPTRP) is disordered. The N-terminal 52 residues, 1–52 (MASLLANGISSFSPQPTSDSSKSPKGFHPKPESLKFPSPKSLNPTRPIFKLR), are a transit peptide targeting the chloroplast. Residues 10–24 (SSFSPQPTSDSSKSP) are compositionally biased toward low complexity.

This sequence belongs to the iron-sulfur cluster assembly SufBD family.

Its subcellular location is the plastid. The protein localises to the chloroplast. Functionally, involved in light signaling, probably by mediating the transport and correct distribution of protoporphyrin IX, a chlorophyll precursor, in response to far-red light. The chain is Iron-sulfur cluster assembly SufBD family protein ABCI8, chloroplastic (ABCI8) from Arabidopsis thaliana (Mouse-ear cress).